Here is a 1006-residue protein sequence, read N- to C-terminus: GATA zinc finger domain-containing protein 7 (1006 aa).

Residues S55–S70 show a composition bias toward low complexity. Disordered stretches follow at residues S55–L116, P128–Y248, N381–T499, S528–S638, and Y657–D800. Residues D71–I86 are compositionally biased toward polar residues. Low complexity-rich tracts occupy residues S87–S110 and P128–S158. A compositionally biased stretch (polar residues) spans P159 to P168. Residues N169–S180 show a composition bias toward low complexity. Residues I181 to S190 show a composition bias toward polar residues. Low complexity-rich tracts occupy residues N205–N241 and T388–N410. Polar residues predominate over residues I411–T426. Composition is skewed to low complexity over residues P427 to Q456 and S468 to P496. Polar residues predominate over residues S528–Y539. A compositionally biased stretch (low complexity) spans T540–P557. The span at L558 to G589 shows a compositional bias: polar residues. 2 stretches are compositionally biased toward low complexity: residues N590–N601 and S619–S638. A compositionally biased stretch (polar residues) spans G662 to Y680. Low complexity-rich tracts occupy residues N681 to N706 and S713 to N785. The GATA-type zinc-finger motif lies at C842–C867. The tract at residues N925 to I957 is disordered. Over residues S928 to S954 the composition is skewed to low complexity.

In Dictyostelium discoideum (Social amoeba), this protein is GATA zinc finger domain-containing protein 7 (gtaG).